Reading from the N-terminus, the 613-residue chain is ATP-dependent RNA helicase DeaD (613 aa).

The Q motif signature appears at 5–33 (ITFNDLGLPEFILKAVSDLGFETPSPIQQ). One can recognise a Helicase ATP-binding domain in the interval 36–207 (IPHLLNGNDV…KRFMNDPQEV (172 aa)). 49-56 (AQTGSGKT) provides a ligand contact to ATP. The DEAD box motif lies at 155-158 (DEAD). Residues 231–378 (KNEALLRFLE…EVELPNHLVL (148 aa)) form the Helicase C-terminal domain. Disordered stretches follow at residues 434–476 (ILPP…PQPM) and 552–613 (AVKS…RSSF). 2 stretches are compositionally biased toward basic and acidic residues: residues 440–469 (PMEKRRRERNDRGDRRENPRSAERRGERKG) and 556–613 (DNSR…RSSF).

The protein belongs to the DEAD box helicase family. DeaD/CsdA subfamily.

The protein resides in the cytoplasm. It carries out the reaction ATP + H2O = ADP + phosphate + H(+). DEAD-box RNA helicase involved in various cellular processes at low temperature, including ribosome biogenesis, mRNA degradation and translation initiation. This chain is ATP-dependent RNA helicase DeaD, found in Haemophilus influenzae (strain ATCC 51907 / DSM 11121 / KW20 / Rd).